The following is a 203-amino-acid chain: Protein S40-6 (203 aa).

Residues 1 to 33 are disordered; sequence MAKGRKPTTMNRSDRYLGSYTYGDSHGNSVTDE.

It belongs to the senescence regulator S40 family.

Its subcellular location is the cytoplasm. This chain is Protein S40-6, found in Arabidopsis thaliana (Mouse-ear cress).